We begin with the raw amino-acid sequence, 379 residues long: MLTPIQNFLKQEAAGGILLFIFATLAIILANTPLSYLYFDFLQTPVSVQIGAFIINKPLLMWVNDGLMAVFFMLVGMEVKRELLEGSLSSYQRAVFPAIAATGGMVVPAIVFLVFNATHPEFQEGWAIPMATDIAFALGVIALLGKRVPLALKIFLLALAIIDDLGAIVVIALFFSHDLSPQAFIFAGIAVAILITMNRLKITALSAYGIVGIILWASVLKSGVHATLAGVIIGFCIPLNGKKGERPLDDFEHTLSPWSAFAILPLFAFCNAGVSLIGMGMDNLTSTLPMGIALGLLLGKPLGIFSFCFVAVKLGIAKLSEGINFKQIFAVSVLCGIGFTMSMFLAGLAFGGESDSENVTALARLGILIGSGFSAVLGY.

12 helical membrane passes run 14–34 (AGGI…NTPL), 59–79 (LLMW…GMEV), 95–115 (VFPA…FLVF), 125–145 (GWAI…ALLG), 154–174 (IFLL…IALF), 175–195 (FSHD…AILI), 200–220 (LKIT…ASVL), 221–241 (KSGV…PLNG), 261–281 (FAIL…GMGM), 292–312 (IALG…FVAV), 328–348 (IFAV…LAGL), and 359–379 (VTAL…VLGY).

This sequence belongs to the NhaA Na(+)/H(+) (TC 2.A.33) antiporter family.

The protein localises to the cell inner membrane. The catalysed reaction is Na(+)(in) + 2 H(+)(out) = Na(+)(out) + 2 H(+)(in). Na(+)/H(+) antiporter that extrudes sodium in exchange for external protons. The protein is Na(+)/H(+) antiporter NhaA of Pasteurella multocida (strain Pm70).